A 336-amino-acid chain; its full sequence is MTIRVGINGFGRIGRNYFRALLEQGADIEIVAVNDLGDTATTAHLLKYDTILGRLKAEVSHTEDTITVDGKTIKVLSERNPADIPWGELGVDIVIESTGIFTKKADAEKHIAGGAKKVLISAPAKDEDITIVMGVNQDKYDPANHHVISNASCTTNCVAPMAKVLDENFGIVKGLMTTVHAYTNDQRILDFPHKDLRRARAAAENIIPTTTGAAKATALVLPQLKGKLDGIAMRVPVPTGSATDLVVELQREVTKDEVNAAFKKAADDGDLKGILFYTEDAIVSSDITGDPASCTFDSSLTMVQEGKSVKILGWYDNEWGYSNRLVDLTVFVGNQL.

Residues 12–13, D35, R79, and S121 contribute to the NAD(+) site; that span reads RI. D-glyceraldehyde 3-phosphate is bound by residues 152–154 and T183; that span reads SCT. C153 functions as the Nucleophile in the catalytic mechanism. N184 contributes to the NAD(+) binding site. D-glyceraldehyde 3-phosphate-binding positions include R198, 211–212, and R234; that span reads TG. An NAD(+)-binding site is contributed by N317.

The protein belongs to the glyceraldehyde-3-phosphate dehydrogenase family. As to quaternary structure, homotetramer.

The protein resides in the cytoplasm. The catalysed reaction is D-glyceraldehyde 3-phosphate + phosphate + NAD(+) = (2R)-3-phospho-glyceroyl phosphate + NADH + H(+). It participates in carbohydrate degradation; glycolysis; pyruvate from D-glyceraldehyde 3-phosphate: step 1/5. Resistant to pentalenolactone. Functionally, catalyzes the oxidative phosphorylation of glyceraldehyde 3-phosphate (G3P) to 1,3-bisphosphoglycerate (BPG) using the cofactor NAD. The first reaction step involves the formation of a hemiacetal intermediate between G3P and a cysteine residue, and this hemiacetal intermediate is then oxidized to a thioester, with concomitant reduction of NAD to NADH. The reduced NADH is then exchanged with the second NAD, and the thioester is attacked by a nucleophilic inorganic phosphate to produce BPG. The polypeptide is Glyceraldehyde-3-phosphate dehydrogenase (gap) (Streptomyces coelicolor (strain ATCC BAA-471 / A3(2) / M145)).